The primary structure comprises 166 residues: Phosphopantetheine adenylyltransferase (166 aa).

Substrate is bound at residue Ser-10. ATP-binding positions include 10-11 (SF) and His-18. Substrate is bound by residues Lys-42, Ala-79, and Arg-93. ATP is bound by residues 94 to 96 (GLR), Glu-104, and 129 to 135 (VRPITAT).

Belongs to the bacterial CoaD family. Homohexamer. Mg(2+) is required as a cofactor.

The protein localises to the cytoplasm. It catalyses the reaction (R)-4'-phosphopantetheine + ATP + H(+) = 3'-dephospho-CoA + diphosphate. It functions in the pathway cofactor biosynthesis; coenzyme A biosynthesis; CoA from (R)-pantothenate: step 4/5. Reversibly transfers an adenylyl group from ATP to 4'-phosphopantetheine, yielding dephospho-CoA (dPCoA) and pyrophosphate. In Methylobacterium sp. (strain 4-46), this protein is Phosphopantetheine adenylyltransferase.